We begin with the raw amino-acid sequence, 171 residues long: MNSFEPQSQDSLQRRFHQDNSTTQQPRDTTTPFIPKPASKNHNNSNSSSGAAGRSFQGFGLNVEDDLVSSVVPPVTVVLEGRSICQRISLDKHGSYQSLASALRQMFVDGADSTDDLDLSNAIPGHLIAYEDMENDLLLAGDLTWKDFVRVAKRIRILPVKGNTRQVKRNE.

Polar residues-rich tracts occupy residues 1-11 and 19-32; these read MNSFEPQSQDS and DNSTTQQPRDTTTP. The segment at 1–51 is disordered; that stretch reads MNSFEPQSQDSLQRRFHQDNSTTQQPRDTTTPFIPKPASKNHNNSNSSSGA. Low complexity predominate over residues 40-49; sequence KNHNNSNSSS. The PB1 domain occupies 72-162; that stretch reads VPPVTVVLEG…KRIRILPVKG (91 aa).

It belongs to the Aux/IAA family. Homodimers and heterodimers.

The protein localises to the nucleus. Functionally, aux/IAA proteins are short-lived transcriptional factors that function as repressors of early auxin response genes at low auxin concentrations. Repression is thought to result from the interaction with auxin response factors (ARFs), proteins that bind to the auxin-responsive promoter element (AuxRE). Formation of heterodimers with ARF proteins may alter their ability to modulate early auxin response genes expression. This chain is Auxin-responsive protein IAA33 (IAA33), found in Arabidopsis thaliana (Mouse-ear cress).